The chain runs to 455 residues: Beta-1,3-galactosyl-O-glycosyl-glycoprotein beta-1,6-N-acetylglucosaminyltransferase 4 (455 aa).

At 1–13 the chain is on the cytoplasmic side; it reads MKIFRCCFKYTLQ. A helical; Signal-anchor for type II membrane protein transmembrane segment spans residues 14-34; sequence QKLFILLLTLWLFSLLKLLNV. Topologically, residues 35–455 are lumenal; the sequence is GRLLFPQRDI…TEGTRQSHTL (421 aa). N-linked (GlcNAc...) asparagine glycosylation occurs at N73. Disulfide bonds link C74–C228, C162–C383, C183–C210, and C392–C424. Residues N287 and N382 are each glycosylated (N-linked (GlcNAc...) asparagine).

The protein belongs to the glycosyltransferase 14 family.

The protein resides in the golgi apparatus membrane. It catalyses the reaction a 3-O-[beta-D-galactosyl-(1-&gt;3)-N-acetyl-alpha-D-galactosaminyl]-L-seryl-[protein] + UDP-N-acetyl-alpha-D-glucosamine = 3-O-{beta-D-galactosyl-(1-&gt;3)-[N-acetyl-beta-D-glucosaminyl-(1-&gt;6)]-N-acetyl-alpha-D-galactosaminyl}-L-seryl-[protein] + UDP + H(+). The catalysed reaction is a 3-O-[beta-D-galactosyl-(1-&gt;3)-N-acetyl-alpha-D-galactosaminyl]-L-threonyl-[protein] + UDP-N-acetyl-alpha-D-glucosamine = a 3-O-{beta-D-galactosyl-(1-&gt;3)-[N-acetyl-beta-D-glucosaminyl-(1-&gt;6)]-N-acetyl-alpha-D-galactosaminyl}-L-threonyl-[protein] + UDP + H(+). It functions in the pathway protein modification; protein glycosylation. Its function is as follows. Glycosyltransferase that mediates core 2 O-glycan branching, an important step in mucin-type biosynthesis. Does not have core 4 O-glycan or I-branching enzyme activity. This is Beta-1,3-galactosyl-O-glycosyl-glycoprotein beta-1,6-N-acetylglucosaminyltransferase 4 (Gcnt4) from Mus musculus (Mouse).